The primary structure comprises 199 residues: Cell division protein SepF (199 aa).

The tract at residues threonine 15 to glutamate 79 is disordered.

This sequence belongs to the SepF family. In terms of assembly, homodimer. Interacts with FtsZ.

It is found in the cytoplasm. In terms of biological role, cell division protein that is part of the divisome complex and is recruited early to the Z-ring. Probably stimulates Z-ring formation, perhaps through the cross-linking of FtsZ protofilaments. Its function overlaps with FtsA. In Streptococcus sanguinis (strain SK36), this protein is Cell division protein SepF.